Here is a 556-residue protein sequence, read N- to C-terminus: Guard cell S-type anion channel SLAC1 (556 aa).

The interval 1-103 (MERKQSNAHS…GIINGGDGRK (103 aa)) is disordered. At 1–189 (MERKQSNAHS…EQWPFLLRFP (189 aa)) the chain is on the cytoplasmic side. A coiled-coil region spans residues 10–36 (STFADINEVEDEAEQELQQQENNNNKR). The span at 25–34 (ELQQQENNNN) shows a compositional bias: low complexity. Serine 59 is subject to Phosphoserine; by SRK2E. Residues 69–79 (RESRERDDKKS) show a composition bias toward basic and acidic residues. Serine 86, serine 113, and serine 120 each carry phosphoserine; by SRK2E. Over residues 86–99 (SFGGFESGGIINGG) the composition is skewed to gly residues. Serine 146 bears the Phosphoserine mark. Residues 190–210 (IGCFGICLGLSSQAVLWLALA) traverse the membrane as a helical segment. The Extracellular portion of the chain corresponds to 211–216 (KSPATN). A helical transmembrane segment spans residues 217 to 237 (FLHITPLINLVVWLFSLVVLV). Residues 238–265 (SVSFTYILKCIFYFEAVKREYFHPVRVN) are Cytoplasmic-facing. A helical membrane pass occupies residues 266-286 (FFFAPWVVCMFLAISVPPMFS). The Extracellular portion of the chain corresponds to 287-295 (PNRKYLHPA). The chain crosses the membrane as a helical span at residues 296–316 (IWCVFMGPYFFLELKIYGQWL). Topologically, residues 317–325 (SGGKRRLCK) are cytoplasmic. The helical transmembrane segment at 326–346 (VANPSSHLSVVGNFVGAILAS) threads the bilayer. Residues 347-352 (KVGWDE) are Extracellular-facing. Residues 353–373 (VAKFLWAVGFAHYLVVFVTLY) traverse the membrane as a helical segment. Residues 374–388 (QRLPTSEALPKELHP) lie on the Cytoplasmic side of the membrane. Residues 389 to 409 (VYSMFIAAPSAASIAWNTIYG) traverse the membrane as a helical segment. Residues 410 to 418 (QFDGCSRTC) lie on the Extracellular side of the membrane. A helical transmembrane segment spans residues 419-439 (FFIALFLYISLVARINFFTGF). Residue lysine 440 is a topological domain, cytoplasmic. A helical transmembrane segment spans residues 441-463 (FSVAWWSYTFPMTTASVATIKYA). The Extracellular segment spans residues 464-479 (EAVPGYPSRALALTLS). A helical membrane pass occupies residues 480 to 500 (FISTAMVCVLFVSTLLHAFVW). The Cytoplasmic portion of the chain corresponds to 501-556 (QTLFPNDLAIAITKRKLTREKKPFKRAYDLKRWTKQALAKKISAEKDFEAEEESHH).

Belongs to the SLAC1 S-type anion channel family. As to quaternary structure, homotrimer. Interacts with SRK2E, CPK6, CPK21, CPK23 and PP2CA. The channel is inactivated upon PP2CA and ABI1 binding. Interacts with KAT1, KAT2, KAT3/KC1 and AKT2. Interacts with GHR1. Phosphorylation by SRK2E, especially on Ser-120, activates the channel. Also phosphorylated and activated by CPK21 and CPK23. Abscisic acid (ABA) promotes phosphorylation. This phosphorylation is inhibited by ABI1. Phosphorylated and activated by GHR1; this phosphorylation is repressed by ABI2 but not ABI1. Phosphorylated by HT1 on N-terminus but not C-terminus. As to expression, preferentially expressed in guard cells. Also detected in the vascular strands close to the leaf margins.

The protein localises to the cell membrane. Its activity is regulated as follows. Activated by GHR1-mediated phosphorylation which is negatively regulated by ABI2 but not ABI1. Activation by SRK2E/OST1 and GHR1 is repressed by HT1. Functionally, slow, weak voltage-dependent S-type anion efflux channel involved in maintenance of anion homeostasis. Cl(-) efflux through SLAC1 causes membrane depolarization, which activates outward-rectifying K1 channels, leading to KCl and water efflux to reduce turgor further and cause stomatal closure, that reduces water loss and promotes leaf turgor. Essential for stomatal closure in response to CO(2), abscisic acid (ABA), ozone O(3), light/dark transitions, humidity change, calcium ions, hydrogen peroxide H(2)O(2), reactive oxygen species (ROS), and nitric oxide. Binds to the highly selective inward-rectifying potassium channels KAT1 and AKT2, and inhibits their activities. Functions as an essential negative regulator of inward potassium channels in guard cells. Essential for the efficient stomatal closure and opening in guard cells. Involved in the local and/or systemic stomatal responses (e.g. stomatal closure) to light stress. The chain is Guard cell S-type anion channel SLAC1 from Arabidopsis thaliana (Mouse-ear cress).